Here is a 37-residue protein sequence, read N- to C-terminus: Large ribosomal subunit protein bL36 (37 aa).

It belongs to the bacterial ribosomal protein bL36 family.

In Prochlorococcus marinus (strain MIT 9313), this protein is Large ribosomal subunit protein bL36.